Consider the following 106-residue polypeptide: Large ribosomal subunit protein uL24 (106 aa).

It belongs to the universal ribosomal protein uL24 family. Part of the 50S ribosomal subunit.

In terms of biological role, one of two assembly initiator proteins, it binds directly to the 5'-end of the 23S rRNA, where it nucleates assembly of the 50S subunit. Its function is as follows. One of the proteins that surrounds the polypeptide exit tunnel on the outside of the subunit. This Polaromonas naphthalenivorans (strain CJ2) protein is Large ribosomal subunit protein uL24.